Consider the following 173-residue polypeptide: 3-hydroxydecanoyl-[acyl-carrier-protein] dehydratase (173 aa).

His-71 is an active-site residue.

It belongs to the thioester dehydratase family. FabA subfamily. Homodimer.

Its subcellular location is the cytoplasm. It carries out the reaction a (3R)-hydroxyacyl-[ACP] = a (2E)-enoyl-[ACP] + H2O. It catalyses the reaction (3R)-hydroxydecanoyl-[ACP] = (2E)-decenoyl-[ACP] + H2O. The enzyme catalyses (2E)-decenoyl-[ACP] = (3Z)-decenoyl-[ACP]. It functions in the pathway lipid metabolism; fatty acid biosynthesis. Necessary for the introduction of cis unsaturation into fatty acids. Catalyzes the dehydration of (3R)-3-hydroxydecanoyl-ACP to E-(2)-decenoyl-ACP and then its isomerization to Z-(3)-decenoyl-ACP. Can catalyze the dehydratase reaction for beta-hydroxyacyl-ACPs with saturated chain lengths up to 16:0, being most active on intermediate chain length. In Bradyrhizobium sp. (strain BTAi1 / ATCC BAA-1182), this protein is 3-hydroxydecanoyl-[acyl-carrier-protein] dehydratase.